The following is a 275-amino-acid chain: Gibberellin-regulated protein 14 (275 aa).

The first 21 residues, 1-21 (MALSLLSVFIFFHVFTNVVFA), serve as a signal peptide directing secretion. The tract at residues 34–207 (PTPTLPSPSP…TAPPVKPPTP (174 aa)) is disordered. Residues 36–207 (PTLPSPSPAT…TAPPVKPPTP (172 aa)) show a composition bias toward pro residues.

This sequence belongs to the GASA family. Six disulfide bonds may be present. Expressed in flower abscission zone, style, stamen filaments and lateral roots.

The protein localises to the secreted. Functionally, gibberellin-regulated protein that may function in hormonal controlled steps of development such as seed germination, flowering and seed maturation. The chain is Gibberellin-regulated protein 14 (GASA14) from Arabidopsis thaliana (Mouse-ear cress).